A 559-amino-acid chain; its full sequence is Polypeptide N-acetylgalactosaminyltransferase 1 (559 aa).

At 1-8 the chain is on the cytoplasmic side; sequence MRKFAYCK. The helical; Signal-anchor for type II membrane protein transmembrane segment at 9 to 28 threads the bilayer; it reads VVLATSLVWVLLDMFLLLYF. The Lumenal segment spans residues 29-559; that stretch reads SECNKCEEKK…LRNVTLPEIF (531 aa). N-linked (GlcNAc...) asparagine glycosylation occurs at Asn95. Cystine bridges form between Cys106–Cys339, Cys330–Cys408, Cys442–Cys459, Cys482–Cys497, and Cys523–Cys540. A catalytic subdomain A region spans residues 115-225; the sequence is LPTTSVVIVF…VGWLEPLLAR (111 aa). Positions 156 and 186 each coordinate substrate. Mn(2+) contacts are provided by Asp209 and His211. The interval 285 to 347 is catalytic subdomain B; that stretch reads PVRTPTMAGG…TCSHVGHVFR (63 aa). Position 316 (Trp316) interacts with substrate. Residue His344 participates in Mn(2+) binding. The substrate site is built by Arg347 and Tyr352. Positions 429–551 constitute a Ricin B-type lectin domain; that stretch reads FSLGEIRNVE…GSRSQQWLLR (123 aa). The N-linked (GlcNAc...) asparagine glycan is linked to Asn552.

Belongs to the glycosyltransferase 2 family. GalNAc-T subfamily. It depends on Mn(2+) as a cofactor. Heart, brain, spleen, liver, skeletal muscle and kidney.

The protein localises to the golgi apparatus. It is found in the golgi stack membrane. The protein resides in the secreted. It carries out the reaction L-seryl-[protein] + UDP-N-acetyl-alpha-D-galactosamine = a 3-O-[N-acetyl-alpha-D-galactosaminyl]-L-seryl-[protein] + UDP + H(+). It catalyses the reaction L-threonyl-[protein] + UDP-N-acetyl-alpha-D-galactosamine = a 3-O-[N-acetyl-alpha-D-galactosaminyl]-L-threonyl-[protein] + UDP + H(+). Its pathway is protein modification; protein glycosylation. Catalyzes the initial reaction in O-linked oligosaccharide biosynthesis, the transfer of an N-acetyl-D-galactosamine residue to a serine or threonine residue on the protein receptor. Has a broad spectrum of substrates such as apomucin-, MUC5AC-, MUC1- and MUC2-derived peptides. The protein is Polypeptide N-acetylgalactosaminyltransferase 1 of Rattus norvegicus (Rat).